A 192-amino-acid chain; its full sequence is Ion-translocating oxidoreductase complex subunit B (192 aa).

The interval 1–26 is hydrophobic; it reads MNTIWIAVGALTFLGLVFGAILGYAS. A 4Fe-4S domain is found at 32-91; the sequence is EDDPVVEKIDAILPQSQCGQCGYPGCRPYAEAVGLQGEKINRCAPGGEAVMLKIADLLNV. Cys49, Cys52, Cys57, Cys74, Cys117, Cys120, Cys123, Cys127, Cys147, Cys150, Cys153, and Cys157 together coordinate [4Fe-4S] cluster. 4Fe-4S ferredoxin-type domains follow at residues 108–137 and 138–167; these read MLAVIDENHCIGCTKCIQACPVDAIVGATR and AMHTVMSDLCTGCNLCVDPCPTHCIELRPV.

This sequence belongs to the 4Fe4S bacterial-type ferredoxin family. RnfB subfamily. In terms of assembly, the complex is composed of six subunits: RsxA, RsxB, RsxC, RsxD, RsxE and RsxG. The cofactor is [4Fe-4S] cluster.

It localises to the cell inner membrane. Functionally, part of a membrane-bound complex that couples electron transfer with translocation of ions across the membrane. Required to maintain the reduced state of SoxR. The sequence is that of Ion-translocating oxidoreductase complex subunit B from Salmonella arizonae (strain ATCC BAA-731 / CDC346-86 / RSK2980).